Consider the following 388-residue polypeptide: Processive diacylglycerol beta-glucosyltransferase (388 aa).

The protein belongs to the glycosyltransferase 28 family. UgtP subfamily.

Its subcellular location is the cell membrane. The catalysed reaction is a 1,2-diacyl-3-O-(beta-D-glucopyranosyl)-sn-glycerol + UDP-alpha-D-glucose = a 1,2-diacyl-3-O-(beta-D-Glc-(1-&gt;6)-beta-D-Glc)-sn-glycerol + UDP + H(+). It carries out the reaction a 1,2-diacyl-3-O-(beta-D-Glc-(1-&gt;6)-beta-D-Glc)-sn-glycerol + UDP-alpha-D-glucose = a 1,2-diacyl-3-O-(beta-D-Glc-(1-&gt;6)-beta-D-Glc-(1-&gt;6)-beta-D-Glc)-sn-glycerol + UDP + H(+). It catalyses the reaction a 1,2-diacyl-sn-glycerol + UDP-alpha-D-glucose = a 1,2-diacyl-3-O-(beta-D-glucopyranosyl)-sn-glycerol + UDP + H(+). It functions in the pathway glycolipid metabolism; diglucosyl-diacylglycerol biosynthesis. Its function is as follows. Processive glucosyltransferase involved in the biosynthesis of both the bilayer- and non-bilayer-forming membrane glucolipids. Is able to successively transfer up to three glucosyl residues to diacylglycerol (DAG), thereby catalyzing the formation of beta-monoglucosyl-DAG (3-O-(beta-D-glucopyranosyl)-1,2-diacyl-sn-glycerol), beta-diglucosyl-DAG (3-O-(beta-D-glucopyranosyl-beta-(1-&gt;6)-D-glucopyranosyl)-1,2-diacyl-sn-glycerol) and beta-triglucosyl-DAG (3-O-(beta-D-glucopyranosyl-beta-(1-&gt;6)-D-glucopyranosyl-beta-(1-&gt;6)-D-glucopyranosyl)-1,2-diacyl-sn-glycerol). Beta-diglucosyl-DAG is the predominant glycolipid found in Bacillales and is also used as a membrane anchor for lipoteichoic acid (LTA). In Bacillus cereus (strain AH187), this protein is Processive diacylglycerol beta-glucosyltransferase.